A 335-amino-acid chain; its full sequence is L-threo-3-deoxy-hexylosonate aldolase (335 aa).

Substrate is bound at residue 50–51; sequence SN. The Schiff-base intermediate with substrate role is filled by Lys-175.

This sequence belongs to the DapA family.

The enzyme catalyses 2-dehydro-3-deoxy-L-galactonate = L-glyceraldehyde + pyruvate. Its pathway is carbohydrate acid metabolism. Its function is as follows. Mediates the conversion of 2-dehydro-3-deoxy-L-galactonate to pyruvate and L-glyceraldehyde in D-galacturonate catabolic process. The chain is L-threo-3-deoxy-hexylosonate aldolase (gaaC) from Aspergillus niger.